Reading from the N-terminus, the 322-residue chain is Coelomocyte uptake defective protein 15 (322 aa).

Positions M1 to S20 are cleaved as a signal peptide. N-linked (GlcNAc...) asparagine glycosylation is found at N62, N98, N144, N170, N180, N183, and N222. The helical transmembrane segment at L244–A264 threads the bilayer.

The protein belongs to the OSTM1 family.

The protein resides in the membrane. In terms of biological role, modulates the transport of substances from the endosomal to lysosomal compartments. Plays a role in lysosome formation and function in coelomocytes. In Caenorhabditis elegans, this protein is Coelomocyte uptake defective protein 15.